The chain runs to 1043 residues: Phosphatidylinositol 4,5-bisphosphate 3-kinase catalytic subunit delta isoform (1043 aa).

A PI3K-ABD domain is found at 16 to 105; the sequence is ESQSVVVDFL…LPVLRLVARE (90 aa). The PI3K-RBD domain maps to 187–278; the sequence is NRALLVNVKF…GLTPHLTMVH (92 aa). The interval 287–312 is disordered; it reads DEQSNPAPQVQKPRAKPPPIPAKKPS. In terms of domain architecture, C2 PI3K-type spans 319–476; sequence LEQPFSIELI…SAAALVIYLP (158 aa). Residues 496–673 form the PIK helical domain; it reads RHGERGRITE…GLIMEAYCRG (178 aa). Tyr-523 is modified (phosphotyrosine). Residues 744-1026 form the PI3K/PI4K catalytic domain; sequence CVEQCTFMDS…KFNEALRESW (283 aa). The tract at residues 750 to 756 is G-loop; the sequence is FMDSKMK. The segment at 889–897 is catalytic loop; that stretch reads GIGDRHSDN. Residues 908-934 are activation loop; that stretch reads HIDFGHFLGNFKTKFGINRERVPFILT. The residue at position 1038 (Ser-1038) is a Phosphoserine; by autocatalysis.

This sequence belongs to the PI3/PI4-kinase family. As to quaternary structure, heterodimer of a catalytic subunit PIK3CD and a p85 regulatory subunit (PIK3R1, PIK3R2 or PIK3R3). Interacts with ERAS and HRAS. Autophosphorylation on Ser-1038 results in the almost complete inactivation of the lipid kinase activity. In terms of tissue distribution, abundantly expressed in adult mouse spleen as well as in testis. Isoform 1 is expressed in spleen and lung (at protein level). Isoform 1 is expressed predominantly in leukocytes.

Its subcellular location is the cytoplasm. It carries out the reaction a 1,2-diacyl-sn-glycero-3-phospho-(1D-myo-inositol-4,5-bisphosphate) + ATP = a 1,2-diacyl-sn-glycero-3-phospho-(1D-myo-inositol-3,4,5-trisphosphate) + ADP + H(+). The enzyme catalyses a 1,2-diacyl-sn-glycero-3-phospho-(1D-myo-inositol) + ATP = a 1,2-diacyl-sn-glycero-3-phospho-(1D-myo-inositol-3-phosphate) + ADP + H(+). It catalyses the reaction 1-octadecanoyl-2-(5Z,8Z,11Z,14Z)-eicosatetraenoyl-sn-glycero-3-phospho-1D-myo-inositol 4,5-bisphosphate + ATP = 1-octadecanoyl-2-(5Z,8Z,11Z,14Z-eicosatetraenoyl)-sn-glycero-3-phospho-(1D-myo-inositol 3,4,5-triphosphate) + ADP + H(+). The protein operates within phospholipid metabolism; phosphatidylinositol phosphate biosynthesis. Activated by growth factors and cytokine receptors through a tyrosine-kinase-dependent mechanism. Activated by RAS. IC87114 inhibits lipid kinase activity and is selective in cells at doses up to 5-10 uM. Among other effects, IC87114 reduces allergic responses, prevents the recruitment of antigen-specific T cells into target tissue, and affects natural killer cell chemotaxis. Functionally, phosphoinositide-3-kinase (PI3K) phosphorylates phosphatidylinositol (PI) and its phosphorylated derivatives at position 3 of the inositol ring to produce 3-phosphoinositides. Uses ATP and PtdIns(4,5)P2 (phosphatidylinositol 4,5-bisphosphate) to generate phosphatidylinositol 3,4,5-trisphosphate (PIP3). PIP3 plays a key role by recruiting PH domain-containing proteins to the membrane, including AKT1 and PDPK1, activating signaling cascades involved in cell growth, survival, proliferation, motility and morphology. Mediates immune responses. Plays a role in B-cell development, proliferation, migration, and function. Required for B-cell receptor (BCR) signaling. Mediates B-cell proliferation response to anti-IgM, anti-CD40 and IL4 stimulation. Promotes cytokine production in response to TLR4 and TLR9. Required for antibody class switch mediated by TLR9. Involved in the antigen presentation function of B-cells. Involved in B-cell chemotaxis in response to CXCL13 and sphingosine 1-phosphate (S1P). Required for proliferation, signaling and cytokine production of naive, effector and memory T-cells. Required for T-cell receptor (TCR) signaling. Mediates TCR signaling events at the immune synapse. Activation by TCR leads to antigen-dependent memory T-cell migration and retention to antigenic tissues. Together with PIK3CG participates in T-cell development. Contributes to T-helper cell expansion and differentiation. Required for T-cell migration mediated by homing receptors SELL/CD62L, CCR7 and S1PR1 and antigen dependent recruitment of T-cells. Together with PIK3CG is involved in natural killer (NK) cell development and migration towards the sites of inflammation. Participates in NK cell receptor activation. Plays a role in NK cell maturation and cytokine production. Together with PIK3CG is involved in neutrophil chemotaxis and extravasation. Together with PIK3CG participates in neutrophil respiratory burst. Plays important roles in mast-cell development and mast cell mediated allergic response. Involved in stem cell factor (SCF)-mediated proliferation, adhesion and migration. Required for allergen-IgE-induced degranulation and cytokine release. The lipid kinase activity is required for its biological function. In Mus musculus (Mouse), this protein is Phosphatidylinositol 4,5-bisphosphate 3-kinase catalytic subunit delta isoform (Pik3cd).